The sequence spans 208 residues: Ras-related protein Rab-6A (208 aa).

N-acetylserine is present on serine 2. Serine 23, valine 24, glycine 25, lysine 26, threonine 27, serine 28, aspartate 39, asparagine 40, tyrosine 42, and threonine 45 together coordinate GTP. Position 27 (threonine 27) interacts with Mg(2+). Positions 32 to 50 match the Switch 1 motif; the sequence is RFMYDSFDNTYQATIGIDF. Residues threonine 45 and aspartate 68 each contribute to the Mg(2+) site. Residues 69 to 88 carry the Switch 2 motif; sequence TAGQERFRSLIPSYIRDSTV. GTP contacts are provided by glycine 71, asparagine 126, lysine 127, aspartate 129, serine 156, alanine 157, and lysine 158. Residue serine 184 is modified to Phosphoserine. 2 S-geranylgeranyl cysteine lipidation sites follow: cysteine 206 and cysteine 208. At cysteine 208 the chain carries Cysteine methyl ester.

The protein belongs to the small GTPase superfamily. Rab family. In terms of assembly, interacts with BICDL1; leads to its accumulation in the pericentrosomal region. Interacts with SCYL1BP1. Interacts with VSP52. Interacts with RABGAP1. Interacts with GCC2 (via its GRIP domain). Interacts with RAB6IP1 (via its RUN 1 domain). Interacts with TMF1. Interacts with CIMAP3. Interacts (GTP-bound) with APBA1/MINT1 isoform 3, also called Mint1_826, but not with isoform 1. Interacts with RIC1; the interaction is direct with a preference for RAB6A-GDP. Interacts with RGP1; the interaction is direct with a preference for RAB6A-GDP. As to quaternary structure, interacts (GTP-bound) with DYNLRB1; the interaction is direct. Interacts with BICD1. Interacts with BICD2; the interaction is direct. Interacts (GTP-bound) with VPS13B. Interacts with BICD1. Interacts (GDP-bound) with DYNLRB1; the interaction is direct. Interacts (GTP-bound) with VPS13B. It depends on Mg(2+) as a cofactor. Post-translationally, prenylated.

Its subcellular location is the golgi apparatus membrane. The protein resides in the cytoplasmic vesicle. The protein localises to the secretory vesicle. It localises to the acrosome membrane. It catalyses the reaction GTP + H2O = GDP + phosphate + H(+). Its activity is regulated as follows. Regulated by guanine nucleotide exchange factors (GEFs) which promote the exchange of bound GDP for free GTP. Regulated by GTPase activating proteins (GAPs) which increase the GTP hydrolysis activity. Inhibited by GDP dissociation inhibitors (GDIs). In terms of biological role, the small GTPases Rab are key regulators of intracellular membrane trafficking, from the formation of transport vesicles to their fusion with membranes. Rabs cycle between an inactive GDP-bound form and an active GTP-bound form that is able to recruit to membranes different sets of downstream effectors directly responsible for vesicle formation, movement, tethering and fusion. RAB6A acts as a regulator of COPI-independent retrograde transport from the Golgi apparatus towards the endoplasmic reticulum (ER). Has a low GTPase activity. Recruits VPS13B to the Golgi membrane. Plays a role in neuron projection development. The protein is Ras-related protein Rab-6A of Mus musculus (Mouse).